The primary structure comprises 1513 residues: Lid2 complex component lid2 (1513 aa).

Residues 56 to 97 (GLSVQLNASNMTDPFKFLLDNWHTIFKNGAIKLLPPEGWQIP) form the JmjN domain. Residues 121-212 (YEKNYDYFKK…YIKPFERDSS (92 aa)) form the ARID domain. The segment at 211–253 (SSPSFKSKRSESSTRKIRNTRSSAQQESPIPETSAQSPVQTIQ) is disordered. Residues 230–253 (TRSSAQQESPIPETSAQSPVQTIQ) are compositionally biased toward polar residues. The segment at 268–318 (GEQCEYCGLDKNPETILLCDGCEAAYHTSCLDPPLTSIPKEDWYCDACKFN) adopts a PHD-type 1 zinc-finger fold. Residues 408–574 (KYSSEPWNLH…DGLLNSSISV (167 aa)) form the JmjC domain. Residue Ser722 is modified to Phosphoserine. The segment at 1063-1086 (LSLNDRPGPPMEPASRETSPDSEG) is disordered. Positions 1076 to 1086 (ASRETSPDSEG) are enriched in basic and acidic residues. Residues 1093-1145 (KKGCIFCFCRLPESGVMIECEICHEWYHAKCLKMSKKKLRQDEKFTCPICDYR) form a PHD-type 2 zinc finger. The RING-type 1; degenerate zinc finger occupies 1096–1143 (CIFCFCRLPESGVMIECEICHEWYHAKCLKMSKKKLRQDEKFTCPICD). Disordered regions lie at residues 1244-1268 (APNP…RQRQ) and 1280-1327 (ASAI…NNKN). Positions 1257-1268 (TRKPRPTKRQRQ) are enriched in basic residues. Over residues 1301 to 1313 (VEAETKSKSEKSP) the composition is skewed to basic and acidic residues. Residues 1316-1326 (NGTNISDANNK) show a composition bias toward polar residues. The PHD-type 3 zinc finger occupies 1352–1403 (NSSCLCGEEFSPRDSFIDCTICERRFHYDCVGLNNEIADSVSKFTCPICMEQ). The RING-type 2; degenerate zinc finger occupies 1354-1401 (SCLCGEEFSPRDSFIDCTICERRFHYDCVGLNNEIADSVSKFTCPICM).

As to quaternary structure, component of the Lid2 complex composed of ash2, jmj3, lid2, sdc1 and snt2.

The protein localises to the nucleus. In Schizosaccharomyces pombe (strain 972 / ATCC 24843) (Fission yeast), this protein is Lid2 complex component lid2 (lid2).